Reading from the N-terminus, the 90-residue chain is uncharacterized protein (90 aa).

A disordered region spans residues 53–90; that stretch reads WRARPDANDADTTSSSSSSETCTESDDSSDVPPARYAV. Low complexity predominate over residues 63-74; the sequence is DTTSSSSSSETC.

This is an uncharacterized protein from Orgyia pseudotsugata (Douglas-fir tussock moth).